Here is a 310-residue protein sequence, read N- to C-terminus: Ribosomal RNA small subunit methyltransferase H (310 aa).

Residues 33–35 (GGH), Asp-52, Phe-79, Asp-98, and Gln-105 contribute to the S-adenosyl-L-methionine site.

The protein belongs to the methyltransferase superfamily. RsmH family.

Its subcellular location is the cytoplasm. It catalyses the reaction cytidine(1402) in 16S rRNA + S-adenosyl-L-methionine = N(4)-methylcytidine(1402) in 16S rRNA + S-adenosyl-L-homocysteine + H(+). Specifically methylates the N4 position of cytidine in position 1402 (C1402) of 16S rRNA. The protein is Ribosomal RNA small subunit methyltransferase H of Campylobacter jejuni subsp. jejuni serotype O:6 (strain 81116 / NCTC 11828).